Consider the following 126-residue polypeptide: MLTDPIADMLTRIRNAHLALHKEVNVPRSRMKESLAAILKQEGYVEDVAVADSNITITLKYLKGKPVISGLKRISTPGRRVYVGAHKIPRVQNGLGICILSTSSGVLDGMTAHEKKVGGELLCEIW.

The protein belongs to the universal ribosomal protein uS8 family. As to quaternary structure, part of the 30S ribosomal subunit. Contacts proteins S5 and S12.

One of the primary rRNA binding proteins, it binds directly to 16S rRNA central domain where it helps coordinate assembly of the platform of the 30S subunit. The protein is Small ribosomal subunit protein uS8 of Desulfovibrio desulfuricans (strain ATCC 27774 / DSM 6949 / MB).